Consider the following 463-residue polypeptide: MGFMDFLAKMGENLPAVSKPKDKPTLTRKLLWTFIGLIVYLLMASIPLYGVTSSNSFLSNFLAQQIIFASSQGTLAQLGIGPVITSGLIMQILVGSKLINVDLTTQEGKSKFTQAEKALALIFIIVESSLFGYVFTRATSNILLPIIVVVQLIIASYIILLLDEMIQKGWGLGSGVSLFIMAGIMKVIFWNMFGIVSVQSQNLPVGFFPLLVSYITSGRNLQEIVLNTSSTTPYQPDLIGLIATVGLTILIVYLVNTNIYIPVTTQRLRGIRTTVPLNFLYVSSIPVIFVSVLGADIQLFASLANSISNSASGILTDIANAFFFPPQGVPHSVYALVVDPVGAAIYAAVFIVLSIVFGMLWIDVAGLDPKTQAEQMIRSGIEIPGMRTNPRIIEGILSKYIYALGFFSSLIVGLIAVVATFLGTYGTGVGLLLAITIAMQYYNLLAYERTLEMYPLLKRIVGE.

Over 1 to 20 (MGFMDFLAKMGENLPAVSKP) the chain is Cytoplasmic. Residues 21 to 47 (KDKPTLTRKLLWTFIGLIVYLLMASIP) traverse the membrane as a helical segment. Residues 48–60 (LYGVTSSNSFLSN) are Extracellular-facing. Positions 61 to 68 (FLAQQIIF) form an intramembrane region, helical. A discontinuously helical transmembrane segment spans residues 61 to 89 (FLAQQIIFASSQGTLAQLGIGPVITSGLI). An intramembrane segment occupies 69–80 (ASSQGTLAQLGI). Residues 81 to 89 (GPVITSGLI) constitute an intramembrane region (helical). Topologically, residues 90–110 (MQILVGSKLINVDLTTQEGKS) are cytoplasmic. The chain crosses the membrane as a helical span at residues 111–134 (KFTQAEKALALIFIIVESSLFGYV). At 135 to 142 (FTRATSNI) the chain is on the extracellular side. A helical membrane pass occupies residues 143–167 (LLPIIVVVQLIIASYIILLLDEMIQ). Residues 168 to 174 (KGWGLGS) lie on the Cytoplasmic side of the membrane. Residues 175-193 (GVSLFIMAGIMKVIFWNMF) traverse the membrane as a helical segment. Residues 194-236 (GIVSVQSQNLPVGFFPLLVSYITSGRNLQEIVLNTSSTTPYQP) are Extracellular-facing. Residues 237–258 (DLIGLIATVGLTILIVYLVNTN) form a helical membrane-spanning segment. Over 259 to 283 (IYIPVTTQRLRGIRTTVPLNFLYVS) the chain is Cytoplasmic. The helical transmembrane segment at 284 to 305 (SIPVIFVSVLGADIQLFASLAN) threads the bilayer. Topologically, residues 306–341 (SISNSASGILTDIANAFFFPPQGVPHSVYALVVDPV) are extracellular. A helical membrane pass occupies residues 342–361 (GAAIYAAVFIVLSIVFGMLW). Over 362–404 (IDVAGLDPKTQAEQMIRSGIEIPGMRTNPRIIEGILSKYIYAL) the chain is Cytoplasmic. A helical transmembrane segment spans residues 405-423 (GFFSSLIVGLIAVVATFLG). The Extracellular segment spans residues 424–426 (TYG). The chain crosses the membrane as a helical span at residues 427 to 441 (TGVGLLLAITIAMQY). Residues 442–463 (YNLLAYERTLEMYPLLKRIVGE) lie on the Cytoplasmic side of the membrane.

The protein belongs to the SecY/SEC61-alpha family. Component of the Sec protein translocase complex. Heterotrimer consisting of alpha (SecY), beta (SecG) and gamma (SecE) subunits. The heterotrimers can form oligomers, although 1 heterotrimer is thought to be able to translocate proteins. Interacts with the ribosome. May interact with SecDF, and other proteins may be involved.

Its subcellular location is the cell membrane. Functionally, the central subunit of the protein translocation channel SecYEG. Consists of two halves formed by TMs 1-5 and 6-10. These two domains form a lateral gate at the front which open onto the bilayer between TMs 2 and 7, and are clamped together by SecE at the back. The channel is closed by both a pore ring composed of hydrophobic SecY resides and a short helix (helix 2A) on the extracellular side of the membrane which forms a plug. The plug probably moves laterally to allow the channel to open. The ring and the pore may move independently. This Sulfolobus acidocaldarius (strain ATCC 33909 / DSM 639 / JCM 8929 / NBRC 15157 / NCIMB 11770) protein is Protein translocase subunit SecY.